The chain runs to 174 residues: Non-classical export protein 2 homolog 1 (174 aa).

The Cytoplasmic segment spans residues methionine 1–asparagine 7. A helical membrane pass occupies residues leucine 8 to isoleucine 28. Over glycine 29–cysteine 41 the chain is Extracellular. Residues methionine 42–tryptophan 62 form a helical membrane-spanning segment. Residues threonine 63–alanine 69 lie on the Cytoplasmic side of the membrane. A helical membrane pass occupies residues isoleucine 70–alanine 90. Residues valine 91–alanine 122 are Extracellular-facing. A helical transmembrane segment spans residues alanine 123–methionine 143. Topologically, residues glycine 144–valine 174 are cytoplasmic.

This sequence belongs to the NCE102 family.

The protein localises to the cell membrane. Functionally, involved in membrane organization. Required for the formation of membrane compartments of CAN1 (MCCs), localization of CAN1 at the MCCs and subsequent invagination of the plasma membrane at the MCCs sites. Involved in eisosome organization and might act as a sensor of sphingolipids that regulates plasma membrane function. Involved in a novel pathway of export of proteins that lack a cleavable signal sequence. Non-classical export pathway also functions as an alternative clearance/detoxification pathway to eliminate damaged material, when the basic repair pathway is not sufficient. This is Non-classical export protein 2 homolog 1 (FHN1) from Saccharomyces cerevisiae (strain ATCC 204508 / S288c) (Baker's yeast).